A 123-amino-acid polypeptide reads, in one-letter code: MALLKISVVVPEGEVYTGEVRSVVLPGVEGEFGVLYGHSNMITLLQAGVIEIETESQKEHIAISWGYAEVTGEHVDILADGAVFIKKESDDRDDAISRAKRLLEDASSDRLAVSSVLAKIESL.

The protein belongs to the ATPase epsilon chain family. In terms of assembly, F-type ATPases have 2 components, CF(1) - the catalytic core - and CF(0) - the membrane proton channel. CF(1) has five subunits: alpha(3), beta(3), gamma(1), delta(1), epsilon(1). CF(0) has three main subunits: a, b and c.

The protein localises to the cell inner membrane. In terms of biological role, produces ATP from ADP in the presence of a proton gradient across the membrane. In Helicobacter acinonychis (strain Sheeba), this protein is ATP synthase epsilon chain.